The chain runs to 2162 residues: Polyketide synthase 1 (2162 aa).

The interval 19-264 (FVFGDQTSCN…TPLAVHAPYH (246 aa)) is N-terminal acylcarrier protein transacylase domain (SAT). One can recognise a Ketosynthase family 3 (KS3) domain in the interval 397 to 841 (DSKIAIIGMS…GGNTALLVED (445 aa)). Catalysis depends on for beta-ketoacyl synthase activity residues C578, H713, and H757. Residues 941–1245 (AFVFSGQGSQ…PSLMRSHDGW (305 aa)) form a malonyl-CoA:ACP transacylase (MAT) domain region. S1030 acts as the For acyl/malonyl transferase activity in catalysis. The tract at residues 1322–1636 (TASVHRIVRE…RRVLDAAMPA (315 aa)) is product template (PT) domain. The interval 1326–1459 (HRIVRESVDR…SSLCFGESRA (134 aa)) is N-terminal hotdog fold. Residues 1326–1631 (HRIVRESVDR…FQGVPRRVLD (306 aa)) enclose the PKS/mFAS DH domain. The Proton acceptor; for dehydratase activity role is filled by H1358. The interval 1486–1631 (LNSRLSSGVI…FQGVPRRVLD (146 aa)) is C-terminal hotdog fold. D1545 functions as the Proton donor; for dehydratase activity in the catalytic mechanism. Positions 1633–1669 (AMPAPKSPNKTRDHASPNATISRAKPPQGSSPASSAQ) are disordered. Over residues 1658–1669 (PPQGSSPASSAQ) the composition is skewed to low complexity. The region spanning 1692–1766 (IDPMHAVLRI…DFAVHLGLDT (75 aa)) is the Carrier 1 domain. At S1726 the chain carries O-(pantetheine 4'-phosphoryl)serine. Residues 1772-1783 (SSGESNVSGGVS) are compositionally biased toward low complexity. Residues 1772–1809 (SSGESNVSGGVSPRSDSVAAMSSDVTTPPAQSPLGSMS) are disordered. The span at 1794-1809 (SDVTTPPAQSPLGSMS) shows a compositional bias: polar residues. In terms of domain architecture, Carrier 2 spans 1807-1884 (SMSSSPCEDL…SFKHVFEQEI (78 aa)). S1844 is modified (O-(pantetheine 4'-phosphoryl)serine). Residues 1896-2160 (LKKYHATSTL…ERVAAFIRSA (265 aa)) are thioesterase (TE) domain. The active-site For thioesterase activity is S1987.

Polyketide synthase; part of the Pks1 gene cluster that mediates the biosynthesis of an anthraquinone derivative pigment that contributes to conidial pigmentation that provides protection from UV radiation, heat and cold stress. The polyketide synthase Pks1 produces 1-acetyl-2,4,6,8-tetrahydroxy-9,10-anthraquinone though condensation of acetyl-CoA with malonyl-CoA. The dehydratase EthD and the laccase Mlac1 further convert the anthraquinone derivative into the final conidial pigment. The sequence is that of Polyketide synthase 1 from Metarhizium album (strain ARSEF 1941).